Consider the following 363-residue polypeptide: uncharacterized protein (363 aa).

It belongs to the TelA family.

This is an uncharacterized protein from Bacillus subtilis (strain 168).